We begin with the raw amino-acid sequence, 460 residues long: Decaprenylphosphoryl-beta-D-ribose oxidase (460 aa).

Residues 19 to 193 form the FAD-binding PCMH-type domain; sequence TAPTVASVLS…LRATIEMTPT (175 aa). FAD contacts are provided by residues 52 to 62, Gly-116, 121 to 124, 128 to 131, Ile-183, and Tyr-414; these read ARGLGRSYGDN, TVGG, and CDIH.

The protein belongs to the DprE1 family. As to quaternary structure, monomer. Interacts with DprE2 to form an epimerase complex.

Its subcellular location is the periplasm. It catalyses the reaction trans,octa-cis-decaprenylphospho-beta-D-ribofuranose + FAD + H(+) = trans,octa-cis-decaprenylphospho-beta-D-erythro-pentofuranosid-2-ulose + FADH2. The protein operates within cell wall biogenesis; cell wall polysaccharide biosynthesis. Is inhibited by 8-nitro-benzothiazinones (BTZs) such as BTZ043; BTZs are a new class of antimycobacterial agents that block formation of both cell-wall lipoarabinomannan and arabinogalactan via inhibition of decaprenyl-phospho-arabinose (DPA) synthesis. BTZs are suicide inhibitors that act via covalent modification of DprE1; the essential nitro group of these compounds is reduced by DprE1 to a nitroso group, which then specifically reacts with Cys-386 of DprE1 to form an irreversible semimercaptal adduct. Other compounds with diverse scaffolds (dinitrobenzamides and nitrobenzoquinoxalines) also act as covalent DprE1 inhibitors. Component of the DprE1-DprE2 complex that catalyzes the 2-step epimerization of decaprenyl-phospho-ribose (DPR) to decaprenyl-phospho-arabinose (DPA), a key precursor that serves as the arabinose donor required for the synthesis of cell-wall arabinans. DprE1 catalyzes the first step of epimerization, namely FAD-dependent oxidation of the C2' hydroxyl of DPR to yield the keto intermediate decaprenyl-phospho-2'-keto-D-arabinose (DPX). The intermediate DPX is then transferred to DprE2 subunit of the epimerase complex, most probably through a 'substrate channel' at the interface of DprE1-DprE2 complex. Can also use farnesyl-phosphoryl-beta-D-ribofuranose (FPR) as substrate in vitro. Appears to be essential for the growth of M.smegmatis. This Mycolicibacterium smegmatis (strain ATCC 700084 / mc(2)155) (Mycobacterium smegmatis) protein is Decaprenylphosphoryl-beta-D-ribose oxidase.